Here is a 477-residue protein sequence, read N- to C-terminus: Ribulose bisphosphate carboxylase large chain (477 aa).

The propeptide occupies 1–2 (MS). At Pro3 the chain carries N-acetylproline. Lys14 carries the post-translational modification N6,N6,N6-trimethyllysine. Residues Asn123 and Thr173 each contribute to the substrate site. Lys175 serves as the catalytic Proton acceptor. Position 177 (Lys177) interacts with substrate. Mg(2+) is bound by residues Lys201, Asp203, and Glu204. Position 201 is an N6-carboxylysine (Lys201). The active-site Proton acceptor is His294. Positions 295, 327, and 379 each coordinate substrate.

The protein belongs to the RuBisCO large chain family. Type I subfamily. Heterohexadecamer of 8 large chains and 8 small chains; disulfide-linked. The disulfide link is formed within the large subunit homodimers. Mg(2+) serves as cofactor. In terms of processing, the disulfide bond which can form in the large chain dimeric partners within the hexadecamer appears to be associated with oxidative stress and protein turnover.

Its subcellular location is the plastid. It localises to the chloroplast. The catalysed reaction is 2 (2R)-3-phosphoglycerate + 2 H(+) = D-ribulose 1,5-bisphosphate + CO2 + H2O. It carries out the reaction D-ribulose 1,5-bisphosphate + O2 = 2-phosphoglycolate + (2R)-3-phosphoglycerate + 2 H(+). Its function is as follows. RuBisCO catalyzes two reactions: the carboxylation of D-ribulose 1,5-bisphosphate, the primary event in carbon dioxide fixation, as well as the oxidative fragmentation of the pentose substrate in the photorespiration process. Both reactions occur simultaneously and in competition at the same active site. The sequence is that of Ribulose bisphosphate carboxylase large chain from Cichorium intybus (Chicory).